A 318-amino-acid polypeptide reads, in one-letter code: Large ribosomal subunit protein uL10 (318 aa).

Tyrosine 24 is modified (phosphotyrosine). Phosphothreonine is present on threonine 59. A Glycyl lysine isopeptide (Lys-Gly) (interchain with G-Cter in ubiquitin) cross-link involves residue lysine 264. Residue lysine 298 forms a Glycyl lysine isopeptide (Lys-Gly) (interchain with G-Cter in SUMO1); alternate linkage. Residue lysine 298 forms a Glycyl lysine isopeptide (Lys-Gly) (interchain with G-Cter in SUMO2); alternate linkage. A disordered region spans residues 298 to 318; it reads KVEAKEESEESDEDMGFGLFD. Residues 303–312 show a composition bias toward acidic residues; sequence EESEESDEDM. Phosphoserine occurs at positions 305 and 308.

Belongs to the universal ribosomal protein uL10 family. In terms of assembly, P0 forms a pentameric complex by interaction with dimers of P1 and P2. Identified in a IGF2BP1-dependent mRNP granule complex containing untranslated mRNAs. Interacts with APEX1. Interacts with FMR1 isoform 6. In terms of processing, ubiquitinated at Lys-264 by RNF14 and RNF25 in response to ribosome collisions (ribosome stalling).

Its subcellular location is the nucleus. The protein localises to the cytoplasm. In terms of biological role, ribosomal protein P0 is the functional equivalent of E.coli protein L10. This chain is Large ribosomal subunit protein uL10 (RPLP0), found in Oryctolagus cuniculus (Rabbit).